The sequence spans 288 residues: uncharacterized protein (288 aa).

Over residues 1–12 (MTEGRCAQHPDG) the composition is skewed to basic and acidic residues. Residues 1–20 (MTEGRCAQHPDGLDVQDVCD) form a disordered region.

This sequence belongs to the class IV-like SAM-binding methyltransferase superfamily. RNA methyltransferase TrmH family.

This is an uncharacterized protein from Mycobacterium tuberculosis (strain ATCC 25618 / H37Rv).